The primary structure comprises 573 residues: Glutamate--tRNA ligase (573 aa).

The 'HIGH' region motif lies at 107–117 (PNPDGAFHLGN).

Belongs to the class-I aminoacyl-tRNA synthetase family. Glutamate--tRNA ligase type 2 subfamily.

It is found in the cytoplasm. The catalysed reaction is tRNA(Glu) + L-glutamate + ATP = L-glutamyl-tRNA(Glu) + AMP + diphosphate. Functionally, catalyzes the attachment of glutamate to tRNA(Glu) in a two-step reaction: glutamate is first activated by ATP to form Glu-AMP and then transferred to the acceptor end of tRNA(Glu). The polypeptide is Glutamate--tRNA ligase (Thermococcus kodakarensis (strain ATCC BAA-918 / JCM 12380 / KOD1) (Pyrococcus kodakaraensis (strain KOD1))).